Here is a 290-residue protein sequence, read N- to C-terminus: 33 kDa chaperonin (290 aa).

2 disulfide bridges follow: Cys235/Cys237 and Cys268/Cys271.

This sequence belongs to the HSP33 family. In terms of processing, under oxidizing conditions two disulfide bonds are formed involving the reactive cysteines. Under reducing conditions zinc is bound to the reactive cysteines and the protein is inactive.

It is found in the cytoplasm. Functionally, redox regulated molecular chaperone. Protects both thermally unfolding and oxidatively damaged proteins from irreversible aggregation. Plays an important role in the bacterial defense system toward oxidative stress. The polypeptide is 33 kDa chaperonin (Streptococcus equi subsp. equi (strain 4047)).